The sequence spans 293 residues: Putative ribose uptake protein RbsU (293 aa).

Helical transmembrane passes span 5–24 (AILI…TIAS), 34–51 (IFGA…LALF), 58–80 (GGMA…IITF), 95–114 (TTAF…LGNW), 121–138 (IIGF…RMTV), 153–170 (SAVI…IYSA), 177–199 (IGGF…IYAL), 212–234 (VSWQ…LISA), 241–263 (LATG…IFFL), and 273–292 (MITI…TVFI).

The protein belongs to the GRP transporter (TC 2.A.7.5) family.

It localises to the cell membrane. Its function is as follows. Could be involved in the uptake of ribose. The sequence is that of Putative ribose uptake protein RbsU (rbsU) from Staphylococcus epidermidis (strain ATCC 35984 / DSM 28319 / BCRC 17069 / CCUG 31568 / BM 3577 / RP62A).